The chain runs to 171 residues: Galectin-related protein A (171 aa).

The Galectin domain maps to 38-170 (PFCGHIKGGL…INGDLQLTKL (133 aa)).

Its function is as follows. Does not bind lactose, and may not bind carbohydrates. The sequence is that of Galectin-related protein A (lgalsl-a) from Xenopus laevis (African clawed frog).